A 407-amino-acid chain; its full sequence is Na(+)-translocating NADH-quinone reductase subunit F (407 aa).

Residues 3–23 form a helical membrane-spanning segment; sequence IILGVVMFTLIVLVLSGLILA. Positions 32 to 126 constitute a 2Fe-2S ferredoxin-type domain; that stretch reads GDVVIEINNE…NMKIELPEEI (95 aa). [2Fe-2S] cluster is bound by residues C69, C75, C78, and C110. Residues 129 to 269 enclose the FAD-binding FR-type domain; sequence VKKWECEVIS…SGPFGEFFAK (141 aa).

Belongs to the NqrF family. As to quaternary structure, composed of six subunits; NqrA, NqrB, NqrC, NqrD, NqrE and NqrF. [2Fe-2S] cluster serves as cofactor. It depends on FAD as a cofactor.

Its subcellular location is the cell inner membrane. It carries out the reaction a ubiquinone + n Na(+)(in) + NADH + H(+) = a ubiquinol + n Na(+)(out) + NAD(+). NQR complex catalyzes the reduction of ubiquinone-1 to ubiquinol by two successive reactions, coupled with the transport of Na(+) ions from the cytoplasm to the periplasm. The first step is catalyzed by NqrF, which accepts electrons from NADH and reduces ubiquinone-1 to ubisemiquinone by a one-electron transfer pathway. The protein is Na(+)-translocating NADH-quinone reductase subunit F of Klebsiella pneumoniae subsp. pneumoniae (strain ATCC 700721 / MGH 78578).